A 458-amino-acid chain; its full sequence is MTRDVRQLFGTDGVRGRANFEPMTVETSVLLGKAVAGVLLEKHAGKHRVVVGKDTRLSGYMFENALIAGLTSMGIETLMLGPIPTPGVAFITRAYRADAGIMISASHNPYRDNGIKIFSSDGFKIGQAVEERIEAMVASKDFGKLPDDHAVGKNKRVKDATGRYIEYAKATFPKGRTLKGLRIVLDCAHGATYRVAPSVFEELDAEVICYGCEPSGCNINAGCGALWPSTIQKAVIEHKADVGIALDGDGDRLIMVDEKGHIVDGDMLLSICASDLKRRQALSDNRVVATVMTNFGVLRYLESLGIQVTISPVGDRHVLQHMLENQAVLGGEQSGHMIFLDYNTTGDGIVSALQVLRIMIESESTLSDLTACIAKSPQALINVPVTKKVPLESLANVQGVLKEVKEVLGDSGRILLRYSGTENICRVMVEGTKKHQVDSLAKTIVDVVEAEIGAEISE.

Ser-106 functions as the Phosphoserine intermediate in the catalytic mechanism. The Mg(2+) site is built by Ser-106, Asp-247, Asp-249, and Asp-251. Ser-106 is modified (phosphoserine).

It belongs to the phosphohexose mutase family. Mg(2+) serves as cofactor. Post-translationally, activated by phosphorylation.

It carries out the reaction alpha-D-glucosamine 1-phosphate = D-glucosamine 6-phosphate. In terms of biological role, catalyzes the conversion of glucosamine-6-phosphate to glucosamine-1-phosphate. The protein is Phosphoglucosamine mutase of Chlamydia trachomatis serovar A (strain ATCC VR-571B / DSM 19440 / HAR-13).